Reading from the N-terminus, the 257-residue chain is MISRKSVITFGMVAIPIGMYTTTTDNDIRFNQLHKEDNSRIRYKKTCAHCGKEVKTEDIVKGYEYDDDKYVVITDEEIEKIKTEKEKSIQILHFAQLNQISPVYYEKTYQAVPETGGEKAFELLRSALMAEQKIAIGKTVMGTKDTLMAIIPREDGILISTMFYADDIKAIQKQYTKPEVNEQEFNMAKLLINSMDTPFDPSKYKDEYQERLRSLIETKISGKEIVAAEPESAGKVIDLMEALKASVEKAQKDKETA.

One can recognise a Ku domain in the interval 9–184; that stretch reads TFGMVAIPIG…YTKPEVNEQE (176 aa).

Belongs to the prokaryotic Ku family. In terms of assembly, homodimer. Interacts with LigD.

Its function is as follows. With LigD forms a non-homologous end joining (NHEJ) DNA repair enzyme, which repairs dsDNA breaks with reduced fidelity. Binds linear dsDNA with 5'- and 3'- overhangs but not closed circular dsDNA nor ssDNA. Recruits and stimulates the ligase activity of LigD. This Lachnoclostridium phytofermentans (strain ATCC 700394 / DSM 18823 / ISDg) (Clostridium phytofermentans) protein is Non-homologous end joining protein Ku.